Reading from the N-terminus, the 453-residue chain is F-box/FBD/LRR-repeat protein At4g00160 (453 aa).

Residues 15-68 (KDRISELPDALLIKILSFLPTKIVVATSVFSKQWRPLWKLVPNLEFDSEDYDDK) form the F-box domain. 6 LRR repeats span residues 89–111 (LESF…LWVG), 165–190 (MKSL…LLSG), 215–239 (VPSL…VINA), 247–270 (IEDL…IFDG), 282–307 (LTSV…IFYQ), and 331–358 (SPKL…KWNE). One can recognise an FBD domain in the interval 355-406 (KWNEPKYVPECLLSHLETFVWRRFDWGREEEKEIATYILKNARRLNKATFST).

The polypeptide is F-box/FBD/LRR-repeat protein At4g00160 (Arabidopsis thaliana (Mouse-ear cress)).